Consider the following 128-residue polypeptide: Small ribosomal subunit protein uS9 (128 aa).

Residues 105–128 (DPRSVERKKPGQPKARRRFQFSKR) form a disordered region. Residues 114-128 (PGQPKARRRFQFSKR) show a composition bias toward basic residues.

The protein belongs to the universal ribosomal protein uS9 family.

This chain is Small ribosomal subunit protein uS9, found in Bacteroides thetaiotaomicron (strain ATCC 29148 / DSM 2079 / JCM 5827 / CCUG 10774 / NCTC 10582 / VPI-5482 / E50).